Here is a 206-residue protein sequence, read N- to C-terminus: MSRYRGPKLRITRRLGALPGLTQKQSKKKGRPGQHGKSNEADNSKKTTEYGIRLEEKQKLKFNYGLTESQLYRYIKEARRRKGVTGLILLQLLEMRLDTICFTLGFAPTIASARQLVNHGHITVNDNVVSIPSFQCQINDVIGIKPKATSKNLVEGNLQTIKQVDLPTHLKFDKSKQEATVINYCDRNELLLNLDELLVIEYYSRR.

Basic residues-rich tracts occupy residues 1–13 (MSRYRGPKLRITR) and 25–34 (QSKKKGRPGQ). The tract at residues 1–50 (MSRYRGPKLRITRRLGALPGLTQKQSKKKGRPGQHGKSNEADNSKKTTEY) is disordered. A compositionally biased stretch (basic and acidic residues) spans 37–50 (KSNEADNSKKTTEY). The region spanning 95-157 (MRLDTICFTL…ATSKNLVEGN (63 aa)) is the S4 RNA-binding domain.

This sequence belongs to the universal ribosomal protein uS4 family. As to quaternary structure, part of the 30S ribosomal subunit. Contacts protein S5. The interaction surface between S4 and S5 is involved in control of translational fidelity.

It localises to the plastid. It is found in the chloroplast. Its function is as follows. One of the primary rRNA binding proteins, it binds directly to 16S rRNA where it nucleates assembly of the body of the 30S subunit. With S5 and S12 plays an important role in translational accuracy. The protein is Small ribosomal subunit protein uS4c (rps4) of Trieres chinensis (Marine centric diatom).